The following is a 456-amino-acid chain: MSEDEAAQAPGPSLSEQDQQSAVQRVAALPLIRATCTAVSEAYSAAKDRHPLLGSACRLAEHCVCDLTTRALDHAQPLLSHLQPQLATVNDLACRGLDKLEEKLPFLQQPSETVVTSAKGVVASSVTGMVGLARQGRRWSVELKRSVSHAMDVVLEKSEELVDHFLPMTEEELAALAAEAEGPEVGSVEEQRKHQGYFVRLGSLSTRLRHLAYEHSLGKLRQKKHHAQDTLAQLQETLELIHRMQCGVTPITPARPGKVHELWEDWSQRPLENGRRRHSQAELETLVLSRNLMRELQSTVDALETSVRGLPPSAQEKVAEVRRSVDALQAAFADARRFGDLPAAVLAEGRGSMARAHACVDELLELVVQAMPLPWLVGPFAPILVERPEPPPDLEALVDEVIGGPDPRWAHLDWPAQQRAWQAQHGEGTVLSGNIPEEEPEPPSRPKHTLMPELDF.

A disordered region spans residues 1-20 (MSEDEAAQAPGPSLSEQDQQ). An interaction with LIPE region spans residues 1–108 (MSEDEAAQAP…KLEEKLPFLQ (108 aa)). The essential for lipid droplet targeting stretch occupies residues 1 to 173 (MSEDEAAQAP…HFLPMTEEEL (173 aa)). A phosphoserine mark is found at Ser-2, Ser-148, and Ser-324. The interval 185–456 (VGSVEEQRKH…KHTLMPELDF (272 aa)) is interaction with PNPLA2 and ABHD5. The tract at residues 420 to 456 (AWQAQHGEGTVLSGNIPEEEPEPPSRPKHTLMPELDF) is disordered. Residues 438-456 (EEPEPPSRPKHTLMPELDF) are recruits mitochondria at the lipid droplet surface.

It belongs to the perilipin family. In terms of assembly, homooligomer. Interacts with PNPLA2; prevents interaction of PNPLA2 with ABHD5. Interacts with ABHD5; targets ABHD5 to lipid droplets and promotes interaction of ABHD5 with PNPLA2. Interacts with LIPE. Phosphorylated by PKA. Phosphorylated on serine in skeletal muscle at rest or upon lipolytic stimulation.

The protein localises to the lipid droplet. It is found in the cytoplasm. The protein resides in the mitochondrion. Its function is as follows. Lipid droplet-associated protein that maintains the balance between lipogenesis and lipolysis and also regulates fatty acid oxidation in oxidative tissues. Recruits mitochondria to the surface of lipid droplets and is involved in lipid droplet homeostasis by regulating both the storage of fatty acids in the form of triglycerides and the release of fatty acids for mitochondrial fatty acid oxidation. In lipid droplet triacylglycerol hydrolysis, plays a role as a scaffolding protein for three major key lipolytic players: ABHD5, PNPLA2 and LIPE. Reduces the triacylglycerol hydrolase activity of PNPLA2 by recruiting and sequestering PNPLA2 to lipid droplets. Phosphorylation by PKA enables lipolysis probably by promoting release of ABHD5 from the perilipin scaffold and by facilitating interaction of ABHD5 with PNPLA2. Also increases lipolysis through interaction with LIPE and upon PKA-mediated phosphorylation of LIPE. This chain is Perilipin-5 (Plin5), found in Ovis aries (Sheep).